Consider the following 50-residue polypeptide: Ribosome-inactivating protein lyophyllin (50 aa).

It carries out the reaction Endohydrolysis of the N-glycosidic bond at one specific adenosine on the 28S rRNA.. N-glycosylase that inhibits protein synthesis by depurinating ribosomal rRNA, and thus acts as a ribosomal inactivating protein (RIP). Has adenine polynucleotide glycosidase activity on the poly(A) substrate A30-ssDNA. Inhibits cell-free translation in rabbit reticulocyte lysate system with an IC(50) of 1 nM. May function in the defense response to pathogens. Displays antifungal activity against C.comatus and P.piricola, but not against R.solani, M.arachidicola and C.gossypii. Inhibits mycelial growth in P.piricola with an IC(50) of 2.5 uM. Has cytotoxic activity against the human cancer cell lines Hela, HepG2, and JAR, with IC(50) of 358.8, 489.8, and 926.9 nM respectively. It also inhibits HIV-1 reverse transcriptase activity (IC(50)=7.9 nM) and disrupts mouse embryonic development. The chain is Ribosome-inactivating protein lyophyllin from Lyophyllum shimeji (Hon-shimeji).